Reading from the N-terminus, the 272-residue chain is Orotidine 5'-phosphate decarboxylase (272 aa).

K92 (proton donor) is an active-site residue.

Belongs to the OMP decarboxylase family. Type 2 subfamily.

It catalyses the reaction orotidine 5'-phosphate + H(+) = UMP + CO2. It functions in the pathway pyrimidine metabolism; UMP biosynthesis via de novo pathway; UMP from orotate: step 2/2. The protein is Orotidine 5'-phosphate decarboxylase (pyrF) of Deinococcus radiodurans (strain ATCC 13939 / DSM 20539 / JCM 16871 / CCUG 27074 / LMG 4051 / NBRC 15346 / NCIMB 9279 / VKM B-1422 / R1).